A 432-amino-acid polypeptide reads, in one-letter code: Septin-14 (432 aa).

The Septin-type G domain maps to 49-315 (QGFTFNILCV…ECYRYQKLQK (267 aa)). Residues 59–66 (GETGIGKS) are G1 motif. GTP-binding positions include 59–66 (GETGIGKS), G114, 195–203 (KADTISKND), G249, and R264. The segment at 111 to 114 (ETVG) is G3 motif. The interval 194–197 (AKAD) is G4 motif. Residues 332-412 (EIFEAKRQEF…IIDFYKMKAA (81 aa)) adopt a coiled-coil conformation. Residues 369–432 (EAEKELQDKF…DTKKDKHRKK (64 aa)) form a required for interaction with SEPTIN4. Required for migration of cortical neurons during corticogenesis region.

This sequence belongs to the TRAFAC class TrmE-Era-EngA-EngB-Septin-like GTPase superfamily. Septin GTPase family. In terms of assembly, septins polymerize into heterooligomeric protein complexes that form filaments, and can associate with cellular membranes, actin filaments and microtubules. GTPase activity is required for filament formation. Interacts with ACTN4. Interacts with SEPTIN9. Interacts (via C-terminus) with SEPTIN4. As to expression, testis-specific (at protein level).

The protein localises to the cytoplasm. The protein resides in the cytoskeleton. It localises to the cell projection. Its subcellular location is the axon. It is found in the dendrite. The protein localises to the perikaryon. The protein resides in the perinuclear region. It localises to the cytoplasmic vesicle. Its subcellular location is the secretory vesicle. It is found in the acrosome. Functionally, filament-forming cytoskeletal GTPase. Involved in the migration of cortical neurons and the formation of neuron leading processes during embryonic development. Plays a role in sperm head formation during spermiogenesis, potentially via facilitating localization of ACTN4 to cell filaments. This Homo sapiens (Human) protein is Septin-14.